The sequence spans 492 residues: Serine incorporator 4 (492 aa).

10 helical membrane-spanning segments follow: residues 59 to 79, 113 to 133, 148 to 168, 179 to 199, 219 to 239, 254 to 274, 281 to 301, 330 to 350, 421 to 441, and 464 to 484; these read YILL…KTVV, AVYR…VLLV, SFWS…FCIP, IGIC…TAFA, GVSL…VLLF, LLSL…APCI, SGLL…FSAL, IPDT…VLFA, GFHF…TNWF, and VASC…PLLA.

This sequence belongs to the TDE1 family.

The protein localises to the membrane. Functionally, incorporates a polar amino acid serine into membranes and facilitates the synthesis of two serine-derived lipids, phosphatidylserine and sphingolipids. This is Serine incorporator 4 (Serinc4) from Mus musculus (Mouse).